The chain runs to 574 residues: MRATRFPLATLKETPADAEVISHQLMLRAGMIRRLASGLYSWTPLGLRVLRKVEGLVRDEMDRAGALELLMPAVQPAELWQESGRWEQYGPELLRLKDRHMREFCFGPTHEEVITDYVRREVKSYRQLPVNYYQIQTKFRDEIRPRFGVMRAREFLMKDAYSFHVDEDSLKETYARMHEAYTRIFTRCGLDFRAVLADTGSIGGNASHEFHVLADSGEDAIAFSDVSDYAANVELAEAVAPATERAAPGEAMRLVDTPNARTIADLVEQHGLAIEKTVKTLVVAAAEGAEAPLIALLVRGDHELNAIKAEKLPQVASPLRMATEEEIRAAIGAGPGSLGPVNLPIPCVVDRAVALMSDFGAGANIDGKHYFGINWERDLALPPVADLRNVVAGDPSPDGQGSLQIRRGIEVGHIFQLGRKYSEAMGATVLDEQGRSLVVTMGCYGIGVSRVVAAAIEQNHDAQGIIWPEALAPFTVALCPINAQKSQRLREAADALYERLLNAGFEVFYDDRGLRPGAMFADMELIGIPHRLVLGERGLDAGEIEYKGRRDTDTTQVALDGVLDFLRQRMNAAH.

The protein belongs to the class-II aminoacyl-tRNA synthetase family. ProS type 1 subfamily. As to quaternary structure, homodimer.

It localises to the cytoplasm. The catalysed reaction is tRNA(Pro) + L-proline + ATP = L-prolyl-tRNA(Pro) + AMP + diphosphate. Its function is as follows. Catalyzes the attachment of proline to tRNA(Pro) in a two-step reaction: proline is first activated by ATP to form Pro-AMP and then transferred to the acceptor end of tRNA(Pro). As ProRS can inadvertently accommodate and process non-cognate amino acids such as alanine and cysteine, to avoid such errors it has two additional distinct editing activities against alanine. One activity is designated as 'pretransfer' editing and involves the tRNA(Pro)-independent hydrolysis of activated Ala-AMP. The other activity is designated 'posttransfer' editing and involves deacylation of mischarged Ala-tRNA(Pro). The misacylated Cys-tRNA(Pro) is not edited by ProRS. The polypeptide is Proline--tRNA ligase (Thioalkalivibrio sulfidiphilus (strain HL-EbGR7)).